A 204-amino-acid chain; its full sequence is Glycerol-3-phosphate acyltransferase (204 aa).

Helical transmembrane passes span 8–28, 53–73, 81–101, 116–136, and 155–175; these read MLVF…CYIF, VPAI…VVLA, FITA…IFFG, FGFS…VAVI, and VIFT…IIIL.

It belongs to the PlsY family. In terms of assembly, probably interacts with PlsX.

The protein localises to the cell inner membrane. It catalyses the reaction an acyl phosphate + sn-glycerol 3-phosphate = a 1-acyl-sn-glycero-3-phosphate + phosphate. The protein operates within lipid metabolism; phospholipid metabolism. Functionally, catalyzes the transfer of an acyl group from acyl-phosphate (acyl-PO(4)) to glycerol-3-phosphate (G3P) to form lysophosphatidic acid (LPA). This enzyme utilizes acyl-phosphate as fatty acyl donor, but not acyl-CoA or acyl-ACP. The chain is Glycerol-3-phosphate acyltransferase from Francisella philomiragia subsp. philomiragia (strain ATCC 25017 / CCUG 19701 / FSC 153 / O#319-036).